Reading from the N-terminus, the 137-residue chain is Probable 4-amino-4-deoxy-L-arabinose-phosphoundecaprenol flippase subunit ArnF (137 aa).

At 1-5 (MSRAR) the chain is on the cytoplasmic side. The helical transmembrane segment at 6-26 (GFAFALGSVALVSGAQLGMRW) threads the bilayer. Residues 27–49 (SMTRLPAPDQWLPALSAGSVDLA) are Periplasmic-facing. A helical transmembrane segment spans residues 50-70 (ALAVVAAAIAAYALSMLCWLL). Topologically, residues 71–80 (ALRDLPLGRA) are cytoplasmic. Residues 81–101 (YSLLSISYALVYLLAASLPLF) traverse the membrane as a helical segment. Position 102 (asparagine 102) is a topological domain, periplasmic. The helical transmembrane segment at 103–123 (EPFTLSKTLGVALVILGVITI) threads the bilayer. The Cytoplasmic segment spans residues 124 to 137 (NSRSAPATSPRNTP).

This sequence belongs to the ArnF family. Heterodimer of ArnE and ArnF.

Its subcellular location is the cell inner membrane. Its pathway is bacterial outer membrane biogenesis; lipopolysaccharide biosynthesis. Functionally, translocates 4-amino-4-deoxy-L-arabinose-phosphoundecaprenol (alpha-L-Ara4N-phosphoundecaprenol) from the cytoplasmic to the periplasmic side of the inner membrane. The protein is Probable 4-amino-4-deoxy-L-arabinose-phosphoundecaprenol flippase subunit ArnF of Pseudomonas fluorescens (strain ATCC BAA-477 / NRRL B-23932 / Pf-5).